Reading from the N-terminus, the 503-residue chain is UDP-N-acetylmuramoylalanine--D-glutamate ligase (503 aa).

129–135 provides a ligand contact to ATP; that stretch reads GTNGKTT.

This sequence belongs to the MurCDEF family.

The protein localises to the cytoplasm. It catalyses the reaction UDP-N-acetyl-alpha-D-muramoyl-L-alanine + D-glutamate + ATP = UDP-N-acetyl-alpha-D-muramoyl-L-alanyl-D-glutamate + ADP + phosphate + H(+). The protein operates within cell wall biogenesis; peptidoglycan biosynthesis. Its function is as follows. Cell wall formation. Catalyzes the addition of glutamate to the nucleotide precursor UDP-N-acetylmuramoyl-L-alanine (UMA). In Burkholderia vietnamiensis (strain G4 / LMG 22486) (Burkholderia cepacia (strain R1808)), this protein is UDP-N-acetylmuramoylalanine--D-glutamate ligase.